The primary structure comprises 663 residues: Polyunsaturated fatty acid lipoxygenase ALOX12 (663 aa).

In terms of domain architecture, PLAT spans 2–114 (GRYRIRVATG…ILSLPEGTAR (113 aa)). Positions 115–663 (LPGDNALDMF…PSCIENSVTI (549 aa)) constitute a Lipoxygenase domain. Serine 246 is modified (phosphoserine). Histidine 360, histidine 365, histidine 540, asparagine 544, and isoleucine 663 together coordinate Fe cation.

It belongs to the lipoxygenase family. Fe cation is required as a cofactor. In terms of tissue distribution, expressed in vascular smooth muscle cells.

The protein resides in the cytoplasm. The protein localises to the cytosol. It localises to the membrane. It carries out the reaction (5Z,8Z,11Z,14Z)-eicosatetraenoate + O2 = (12S)-hydroperoxy-(5Z,8Z,10E,14Z)-eicosatetraenoate. The catalysed reaction is (5Z,8Z,11Z,14Z)-eicosatetraenoate + O2 = (15S)-hydroperoxy-(5Z,8Z,11Z,13E)-eicosatetraenoate. It catalyses the reaction 2 leukotriene A4 + O2 + 2 H2O = 2 lipoxin A4. The enzyme catalyses 2 leukotriene A4 + O2 + 2 H2O = 2 lipoxin B4. It carries out the reaction (14S)-hydroperoxy-(4Z,7Z,10Z,12E,16Z,19Z)-docosahexaenoate = (13S,14S)-epoxy-(4Z,7Z,9E,11E,16Z,19Z)-docosahexaenoate + H2O. The catalysed reaction is N-(5Z,8Z,11Z,14Z)-eicosatetraenoyl-L-alanine + O2 = N-(15S)-hydroperoxy-(5Z,8Z,11Z,13E)-eicosatetraenoyl-alanine. It catalyses the reaction N-(5Z,8Z,11Z,14Z)-eicosatetraenoyl-L-alanine + O2 = N-(12S)-hydroperoxy-(5Z,8Z,10E,14Z)-eicosatetraenoyl-alanine. The enzyme catalyses N-(5Z,8Z,11Z,14Z)-eicosatetraenoyl-gamma-aminobutanoate + O2 = N-(15S)-hydroperoxy-(5Z,8Z,11Z,13E)-eicosatetraenoyl-gamma-aminobutanoate. It carries out the reaction N-(5Z,8Z,11Z,14Z)-eicosatetraenoyl-gamma-aminobutanoate + O2 = N-(12S)-hydroperoxy-(5Z,8Z,10E,14Z)-eicosatetraenoyl-gamma-aminobutanoate. The catalysed reaction is N-(5Z,8Z,11Z,14Z)-eicosatetraenoyl-glycine + O2 = N-(15S)-hydroperoxy-(5Z,8Z,11Z,13E)-eicosatetraenoyl-glycine. It catalyses the reaction N-(5Z,8Z,11Z,14Z)-eicosatetraenoyl-glycine + O2 = N-(12S)-hydroperoxy-(5Z,8Z,10E,14Z)-eicosatetraenoyl-glycine. The enzyme catalyses N-(5Z,8Z,11Z,14Z)-eicosatetraenoyl-taurine + O2 = N-(12S)-hydroperoxy-(5Z,8Z,10E,14Z)-eicosatetraenoyl-taurine. It carries out the reaction N-(5Z,8Z,11Z,14Z)-eicosatetraenoyl-taurine + O2 = N-(15S)-hydroperoxy-(5Z,8Z,11Z,13E)-eicosatetraenoyl-taurine. The catalysed reaction is (4Z,7Z,10Z,13Z,16Z,19Z)-docosahexaenoate + O2 = (14S)-hydroperoxy-(4Z,7Z,10Z,12E,16Z,19Z)-docosahexaenoate. It catalyses the reaction (7S)-hydroperoxy-(4Z,8E,10Z,13Z,16Z,19Z)-docosahexaenoate + O2 = (7S,14S)-dihydroperoxy-(4Z,8E,10Z,12E,16Z,19Z)-docosahexaenoate. The enzyme catalyses (7S)-hydroperoxy-(4Z,8E,10Z,13Z,16Z,19Z)-docosahexaenoate + O2 = (7S,17S)-dihydroperoxy-(4Z,8E,10Z,13Z,15E,19Z)-docosahexaenoate. It carries out the reaction (5Z,8Z,11Z,14Z,17Z)-eicosapentaenoate + O2 = (12S)-hydroperoxy-(5Z,8Z,10E,14Z,17Z)-eicosapentaenoate. The catalysed reaction is (8Z,11Z,14Z)-eicosatrienoate + O2 = (12S)-hydroperoxy-(8Z,10E,14Z)-eicosatrienoate. It catalyses the reaction (9Z,12Z)-octadecadienoate + O2 = (13S)-hydroperoxy-(9Z,11E)-octadecadienoate. The enzyme catalyses (5Z,8Z,11Z)-eicosatrienoate + O2 = (12S)-hydroperoxy-(5Z,8Z,10E)-eicosatrienoate. It carries out the reaction (14R,15S)-epoxy-(5Z,8Z,11Z)-eicosatrienoate + O2 = (12S)-hydroperoxy-(14R,15S)-epoxy-(5Z,8Z,10E)-eicosatrienoate. The catalysed reaction is (14S,15R)-epoxy-(5Z,8Z,11Z)-eicosatrienoate + O2 = (12S)-hydroperoxy-(14S,15R)-epoxy-(5Z,8Z,10E)-eicosatrienoate. The protein operates within lipid metabolism; hydroperoxy eicosatetraenoic acid biosynthesis. Activated by EGF. Arachidonic acid conversion is inhibited by (13S,14S)-epoxy-(4Z,7Z,9E,11E,16Z,19Z)-docosahexaenoate (13S,14S-epoxy-DHA). Arachidonate 12-lipoxygenase activity is decreased when PH decreases from 7.4 to 6. In terms of biological role, catalyzes the regio and stereo-specific incorporation of molecular oxygen into free and esterified polyunsaturated fatty acids generating lipid hydroperoxides that can be further reduced to the corresponding hydroxy species. Mainly converts arachidonate ((5Z,8Z,11Z,14Z)-eicosatetraenoate) to the specific bioactive lipid (12S)-hydroperoxyeicosatetraenoate/(12S)-HPETE. Through the production of bioactive lipids like (12S)-HPETE it regulates different biological processes including platelet activation. It can also catalyze the epoxidation of double bonds of polyunsaturated fatty acids such as (14S)-hydroperoxy-docosahexaenoate/(14S)-HPDHA resulting in the formation of (13S,14S)-epoxy-DHA. Furthermore, it may participate in the sequential oxidations of DHA ((4Z,7Z,10Z,13Z,16Z,19Z)-docosahexaenoate) to generate specialized pro-resolving mediators (SPMs) like resolvin D5 ((7S,17S)-diHPDHA) and (7S,14S)-diHPDHA, that actively down-regulate the immune response and have anti-aggregation properties with platelets. An additional function involves a multistep process by which it transforms leukotriene A4/LTA4 into the bioactive lipids lipoxin A4/LXA4 and lipoxin B4/LXB4, both are vasoactive and LXA4 may regulate neutrophil function via occupancy of specific recognition sites. Can also peroxidize linoleate ((9Z,12Z)-octadecadienoate) to (13S)-hydroperoxyoctadecadienoate/ (13S-HPODE). Due to its role in regulating both the expression of the vascular endothelial growth factor (VEGF, an angiogenic factor involved in the survival and metastasis of solid tumors) and the expression of integrin beta-1 (known to affect tumor cell migration and proliferation), it can be regarded as protumorigenic. Important for cell survival, as it may play a role not only in proliferation but also in the prevention of apoptosis in vascular smooth muscle cells. This chain is Polyunsaturated fatty acid lipoxygenase ALOX12, found in Homo sapiens (Human).